The primary structure comprises 178 residues: Endothelin-2 (178 aa).

A signal peptide spans 1–24; sequence MVAVPTAWCSVALALLLALQEGKG. A propeptide spanning residues 25–46 is cleaved from the precursor; it reads QVAAAPDHPAPSPRARGSHLRP. 2 cysteine pairs are disulfide-bonded: C49–C63 and C51–C59. Positions 70-178 are excised as a propeptide; it reads VNTPGQTAPY…RPMYPRRRKT (109 aa). An endothelin-like region spans residues 96-111; that stretch reads CECSSSGDPACATFCH. A disordered region spans residues 158-178; the sequence is ARQHQEAEREPRPMYPRRRKT. Basic and acidic residues predominate over residues 160–169; the sequence is QHQEAEREPR.

The protein belongs to the endothelin/sarafotoxin family.

It localises to the secreted. Endothelins are endothelium-derived vasoconstrictor peptides. This chain is Endothelin-2 (EDN2), found in Mustela putorius furo (European domestic ferret).